A 402-amino-acid polypeptide reads, in one-letter code: MPHPHNKKIQSFWLITGIIFIAFNLRPAITSVGPVISSIRAELHMSNGAAGFLTALPLLSFAVLSPLAPKLGQRLGNERTLWLGLVILLIGVLTRSTGYTAALFFGTALIGVGIAIGNVLLPSLIKHKYPEKPGIMISLYTTSMNIFAALASGVSVPLATQMNGGWKQAFLLWGGLALLALLIWIPQLRHRDTANQTMKLQSSSIWASKMAWYVTIFMGLQSFLFYSSIAWFPEILRSHGIDTATAGWMVSLMQFASLPSTFLTPVLADRVKQQRGIVAALASVYLIGLCGLLAGGSHTLLAIWMIIIGIGQGSSISLALTLIGLRSENAQQAAALSGMSQSFGYLLAAVGPIFVGYLFDQTHSWTMPIVLLIAALIVMGAAGQGAGRDRYIFQSEKQRNSA.

11 consecutive transmembrane segments (helical) span residues 12–32, 48–68, 80–100, 101–121, 134–154, 168–188, 212–232, 248–268, 291–311, 339–359, and 367–387; these read FWLITGIIFIAFNLRPAITSV, GAAGFLTALPLLSFAVLSPLA, TLWLGLVILLIGVLTRSTGYT, AALFFGTALIGVGIAIGNVLL, GIMISLYTTSMNIFAALASGV, QAFLLWGGLALLALLIWIPQL, WYVTIFMGLQSFLFYSSIAWF, WMVSLMQFASLPSTFLTPVLA, GLLAGGSHTLLAIWMIIIGIG, MSQSFGYLLAAVGPIFVGYLF, and MPIVLLIAALIVMGAAGQGAG.

The protein belongs to the major facilitator superfamily. Cyanate porter (TC 2.A.1.17) family.

The protein resides in the cell membrane. This is an uncharacterized protein from Bacillus subtilis (strain 168).